The primary structure comprises 198 residues: Protein GrpE (198 aa).

The tract at residues 1 to 32 is disordered; the sequence is MTTEKETATPADVEVASQEEQIDQTTEAQVEE.

Belongs to the GrpE family. As to quaternary structure, homodimer.

It is found in the cytoplasm. In terms of biological role, participates actively in the response to hyperosmotic and heat shock by preventing the aggregation of stress-denatured proteins, in association with DnaK and GrpE. It is the nucleotide exchange factor for DnaK and may function as a thermosensor. Unfolded proteins bind initially to DnaJ; upon interaction with the DnaJ-bound protein, DnaK hydrolyzes its bound ATP, resulting in the formation of a stable complex. GrpE releases ADP from DnaK; ATP binding to DnaK triggers the release of the substrate protein, thus completing the reaction cycle. Several rounds of ATP-dependent interactions between DnaJ, DnaK and GrpE are required for fully efficient folding. This is Protein GrpE from Haemophilus ducreyi (strain 35000HP / ATCC 700724).